A 409-amino-acid polypeptide reads, in one-letter code: Small ribosomal subunit protein mS47 (409 aa).

The transit peptide at 1–26 (MQTVKALRRVSEPLQWVRSVSYGRRF) directs the protein to the mitochondrion. The segment at 388-409 (ASELDDSDSELKLPTAQREPYF) is disordered.

The protein belongs to the enoyl-CoA hydratase/isomerase family. Mitochondrion-specific ribosomal protein mS47 subfamily. As to quaternary structure, component of the mitochondrial ribosome small subunit.

It is found in the mitochondrion. The sequence is that of Small ribosomal subunit protein mS47 from Arabidopsis thaliana (Mouse-ear cress).